The sequence spans 267 residues: Undecaprenyl-diphosphatase (267 aa).

The next 8 membrane-spanning stretches (helical) occupy residues 1–21 (MTYFEAFFLALLQGFTEFLPI), 39–59 (QGLAFDVAVHVGTLAAVVMYF), 87–107 (WLIILSTIPAAVCGLMFKDFI), 111–131 (LRSAWVIAITTIVFGLLLWWV), 149–169 (ALFLGIAQAAAMIPGTSRSGI), 189–209 (FLMSIPIITLAGSYLGLKLAL), 218–238 (FLGTGIIVSFISAYICIHFFL), and 246–266 (MTPFVIYRLLLGTSLLAWLAL).

This sequence belongs to the UppP family.

It localises to the cell inner membrane. It catalyses the reaction di-trans,octa-cis-undecaprenyl diphosphate + H2O = di-trans,octa-cis-undecaprenyl phosphate + phosphate + H(+). Its function is as follows. Catalyzes the dephosphorylation of undecaprenyl diphosphate (UPP). Confers resistance to bacitracin. This Aliivibrio salmonicida (strain LFI1238) (Vibrio salmonicida (strain LFI1238)) protein is Undecaprenyl-diphosphatase.